The chain runs to 171 residues: Protein-export protein SecB (171 aa).

Belongs to the SecB family. Homotetramer, a dimer of dimers. One homotetramer interacts with 1 SecA dimer.

The protein resides in the cytoplasm. Its function is as follows. One of the proteins required for the normal export of preproteins out of the cell cytoplasm. It is a molecular chaperone that binds to a subset of precursor proteins, maintaining them in a translocation-competent state. It also specifically binds to its receptor SecA. This Granulibacter bethesdensis (strain ATCC BAA-1260 / CGDNIH1) protein is Protein-export protein SecB.